A 736-amino-acid chain; its full sequence is Phosphoribosylformylglycinamidine synthase subunit PurL (736 aa).

Residue His49 is part of the active site. 2 residues coordinate ATP: Tyr52 and Lys91. A Mg(2+)-binding site is contributed by Glu93. Substrate contacts are provided by residues 94-97 and Arg116; that span reads SHNH. The active-site Proton acceptor is the His95. A Mg(2+)-binding site is contributed by Asp117. Residue Gln240 participates in substrate binding. Asp268 is a binding site for Mg(2+). 312 to 314 contacts substrate; sequence ESQ. 2 residues coordinate ATP: Asp493 and Gly530. Residue Asn531 participates in Mg(2+) binding. Residue Ser533 participates in substrate binding.

This sequence belongs to the FGAMS family. Monomer. Part of the FGAM synthase complex composed of 1 PurL, 1 PurQ and 2 PurS subunits.

Its subcellular location is the cytoplasm. The catalysed reaction is N(2)-formyl-N(1)-(5-phospho-beta-D-ribosyl)glycinamide + L-glutamine + ATP + H2O = 2-formamido-N(1)-(5-O-phospho-beta-D-ribosyl)acetamidine + L-glutamate + ADP + phosphate + H(+). The protein operates within purine metabolism; IMP biosynthesis via de novo pathway; 5-amino-1-(5-phospho-D-ribosyl)imidazole from N(2)-formyl-N(1)-(5-phospho-D-ribosyl)glycinamide: step 1/2. Part of the phosphoribosylformylglycinamidine synthase complex involved in the purines biosynthetic pathway. Catalyzes the ATP-dependent conversion of formylglycinamide ribonucleotide (FGAR) and glutamine to yield formylglycinamidine ribonucleotide (FGAM) and glutamate. The FGAM synthase complex is composed of three subunits. PurQ produces an ammonia molecule by converting glutamine to glutamate. PurL transfers the ammonia molecule to FGAR to form FGAM in an ATP-dependent manner. PurS interacts with PurQ and PurL and is thought to assist in the transfer of the ammonia molecule from PurQ to PurL. This Rhodopseudomonas palustris (strain ATCC BAA-98 / CGA009) protein is Phosphoribosylformylglycinamidine synthase subunit PurL.